Reading from the N-terminus, the 421-residue chain is Serine--tRNA ligase (421 aa).

231 to 233 (TGE) is an L-serine binding site. ATP is bound at residue 262–264 (RRE). E285 lines the L-serine pocket. 349–352 (EVSS) contacts ATP. S384 is an L-serine binding site.

The protein belongs to the class-II aminoacyl-tRNA synthetase family. Type-1 seryl-tRNA synthetase subfamily. Homodimer. The tRNA molecule binds across the dimer.

Its subcellular location is the cytoplasm. It catalyses the reaction tRNA(Ser) + L-serine + ATP = L-seryl-tRNA(Ser) + AMP + diphosphate + H(+). The enzyme catalyses tRNA(Sec) + L-serine + ATP = L-seryl-tRNA(Sec) + AMP + diphosphate + H(+). It participates in aminoacyl-tRNA biosynthesis; selenocysteinyl-tRNA(Sec) biosynthesis; L-seryl-tRNA(Sec) from L-serine and tRNA(Sec): step 1/1. Its function is as follows. Catalyzes the attachment of serine to tRNA(Ser). Is also able to aminoacylate tRNA(Sec) with serine, to form the misacylated tRNA L-seryl-tRNA(Sec), which will be further converted into selenocysteinyl-tRNA(Sec). This chain is Serine--tRNA ligase, found in Methylacidiphilum infernorum (isolate V4) (Methylokorus infernorum (strain V4)).